A 146-amino-acid polypeptide reads, in one-letter code: uncharacterized protein (146 aa).

2 helical membrane-spanning segments follow: residues 89–111 (AIEMVGKVLILVPLLASLVLLLY) and 121–143 (IGCGFCLGTVILAGIVLVGYSVV).

Its subcellular location is the cell membrane. This is an uncharacterized protein from Archaeoglobus fulgidus (strain ATCC 49558 / DSM 4304 / JCM 9628 / NBRC 100126 / VC-16).